We begin with the raw amino-acid sequence, 384 residues long: Chaperone protein DnaJ (384 aa).

The region spanning 5 to 70 is the J domain; that stretch reads DFYQVLGVSK…QKRQMYDQYG (66 aa). Residues 138–216 form a CR-type zinc finger; that stretch reads GKTVELEIPT…CHGHGRKEET (79 aa). 8 residues coordinate Zn(2+): C151, C154, C168, C171, C190, C193, C204, and C207. 4 CXXCXGXG motif repeats span residues 151–158, 168–175, 190–197, and 204–211; these read CRDCNGSG, CGHCHGSG, CPQCRGTG, and CRTCHGHG.

Belongs to the DnaJ family. In terms of assembly, homodimer. The cofactor is Zn(2+).

It localises to the cytoplasm. Participates actively in the response to hyperosmotic and heat shock by preventing the aggregation of stress-denatured proteins and by disaggregating proteins, also in an autonomous, DnaK-independent fashion. Unfolded proteins bind initially to DnaJ; upon interaction with the DnaJ-bound protein, DnaK hydrolyzes its bound ATP, resulting in the formation of a stable complex. GrpE releases ADP from DnaK; ATP binding to DnaK triggers the release of the substrate protein, thus completing the reaction cycle. Several rounds of ATP-dependent interactions between DnaJ, DnaK and GrpE are required for fully efficient folding. Also involved, together with DnaK and GrpE, in the DNA replication of plasmids through activation of initiation proteins. The chain is Chaperone protein DnaJ from Idiomarina loihiensis (strain ATCC BAA-735 / DSM 15497 / L2-TR).